Consider the following 288-residue polypeptide: 33 kDa chaperonin (288 aa).

Disulfide bonds link cysteine 236–cysteine 238 and cysteine 269–cysteine 272.

This sequence belongs to the HSP33 family. Post-translationally, under oxidizing conditions two disulfide bonds are formed involving the reactive cysteines. Under reducing conditions zinc is bound to the reactive cysteines and the protein is inactive.

The protein resides in the cytoplasm. In terms of biological role, redox regulated molecular chaperone. Protects both thermally unfolding and oxidatively damaged proteins from irreversible aggregation. Plays an important role in the bacterial defense system toward oxidative stress. The polypeptide is 33 kDa chaperonin (Syntrophotalea carbinolica (strain DSM 2380 / NBRC 103641 / GraBd1) (Pelobacter carbinolicus)).